The following is a 90-amino-acid chain: Small ribosomal subunit protein bS16 (90 aa).

Belongs to the bacterial ribosomal protein bS16 family.

This is Small ribosomal subunit protein bS16 from Streptococcus equi subsp. zooepidemicus (strain H70).